The primary structure comprises 346 residues: Serine/threonine-protein phosphatase PP1(5.9) (346 aa).

The Mn(2+) site is built by D102, H104, D130, and N162. The active-site Proton donor is H163. Mn(2+) contacts are provided by H211 and H287.

The protein belongs to the PPP phosphatase family. PP-1 subfamily. Mn(2+) serves as cofactor.

The catalysed reaction is O-phospho-L-seryl-[protein] + H2O = L-seryl-[protein] + phosphate. It catalyses the reaction O-phospho-L-threonyl-[protein] + H2O = L-threonyl-[protein] + phosphate. This chain is Serine/threonine-protein phosphatase PP1(5.9), found in Trypanosoma brucei brucei.